We begin with the raw amino-acid sequence, 276 residues long: Inositol-1-monophosphatase ImpA (276 aa).

The Mg(2+) site is built by Glu74, Asp90, Ile92, and Asp93. Residue Glu74 coordinates substrate. Substrate is bound by residues 92 to 95 (IDGT), Arg192, and Asp221. Asp221 contributes to the Mg(2+) binding site.

The protein belongs to the inositol monophosphatase superfamily. The cofactor is Mg(2+).

The enzyme catalyses a myo-inositol phosphate + H2O = myo-inositol + phosphate. The protein operates within polyol metabolism; myo-inositol biosynthesis; myo-inositol from D-glucose 6-phosphate: step 2/2. Its function is as follows. Catalyzes the dephosphorylation of inositol 1-phosphate (I-1-P) to yield free myo-inositol, a key metabolite in mycobacteria. The sequence is that of Inositol-1-monophosphatase ImpA (impA) from Mycolicibacterium smegmatis (strain ATCC 700084 / mc(2)155) (Mycobacterium smegmatis).